The sequence spans 602 residues: Aspartate--tRNA(Asp/Asn) ligase (602 aa).

Glu175 contributes to the L-aspartate binding site. Residues 199 to 202 (QIFK) are aspartate. Arg221 contacts L-aspartate. ATP is bound by residues 221–223 (RDE) and Gln230. His458 contacts L-aspartate. Glu492 is a binding site for ATP. Arg499 provides a ligand contact to L-aspartate. Position 544–547 (544–547 (GLDR)) interacts with ATP.

It belongs to the class-II aminoacyl-tRNA synthetase family. Type 1 subfamily. In terms of assembly, homodimer.

It is found in the cytoplasm. The catalysed reaction is tRNA(Asx) + L-aspartate + ATP = L-aspartyl-tRNA(Asx) + AMP + diphosphate. In terms of biological role, aspartyl-tRNA synthetase with relaxed tRNA specificity since it is able to aspartylate not only its cognate tRNA(Asp) but also tRNA(Asn). Reaction proceeds in two steps: L-aspartate is first activated by ATP to form Asp-AMP and then transferred to the acceptor end of tRNA(Asp/Asn). The chain is Aspartate--tRNA(Asp/Asn) ligase from Cupriavidus metallidurans (strain ATCC 43123 / DSM 2839 / NBRC 102507 / CH34) (Ralstonia metallidurans).